The primary structure comprises 55 residues: uncharacterized protein (55 aa).

Positions Met-1–Ser-30 are disordered.

This is an uncharacterized protein from Frog virus 3 (isolate Goorha) (FV-3).